The sequence spans 146 residues: Spermidine export protein MdtJ (146 aa).

4 helical membrane passes run M1–M21, T31–V51, V54–F74, and V76–A96.

This sequence belongs to the drug/metabolite transporter (DMT) superfamily. Small multidrug resistance (SMR) (TC 2.A.7.1) family. MdtJ subfamily. As to quaternary structure, forms a complex with MdtI.

It is found in the cell inner membrane. Catalyzes the excretion of spermidine. This chain is Spermidine export protein MdtJ, found in Proteus mirabilis (strain HI4320).